We begin with the raw amino-acid sequence, 413 residues long: Tyrosine--tRNA ligase (413 aa).

Tyrosine 33 contacts L-tyrosine. A 'HIGH' region motif is present at residues 38–47 (PTADSLHVGH). L-tyrosine-binding residues include tyrosine 162 and glutamine 166. The 'KMSKS' region signature appears at 225-229 (KFGKT). Lysine 228 is an ATP binding site. An S4 RNA-binding domain is found at 346–413 (TSAIDAIVNV…KKKYYLLEIK (68 aa)).

Belongs to the class-I aminoacyl-tRNA synthetase family. TyrS type 1 subfamily. In terms of assembly, homodimer.

It is found in the cytoplasm. The catalysed reaction is tRNA(Tyr) + L-tyrosine + ATP = L-tyrosyl-tRNA(Tyr) + AMP + diphosphate + H(+). In terms of biological role, catalyzes the attachment of tyrosine to tRNA(Tyr) in a two-step reaction: tyrosine is first activated by ATP to form Tyr-AMP and then transferred to the acceptor end of tRNA(Tyr). The protein is Tyrosine--tRNA ligase of Mesoplasma florum (strain ATCC 33453 / NBRC 100688 / NCTC 11704 / L1) (Acholeplasma florum).